Here is a 180-residue protein sequence, read N- to C-terminus: UPF0397 protein SSA_0592 (180 aa).

A run of 5 helical transmembrane segments spans residues 9-29 (VVAT…NIPT), 45-65 (LFSV…GHAI), 72-92 (GGLW…VGFF), 113-133 (LIQF…DVIV), and 146-166 (IVAI…LLTA).

It belongs to the UPF0397 family.

It localises to the cell membrane. The chain is UPF0397 protein SSA_0592 from Streptococcus sanguinis (strain SK36).